The primary structure comprises 501 residues: Probable cytosol aminopeptidase (501 aa).

Mn(2+) is bound by residues K270 and D275. The active site involves K282. Residues D293, D352, and E354 each contribute to the Mn(2+) site. Residue R356 is part of the active site.

It belongs to the peptidase M17 family. The cofactor is Mn(2+).

It localises to the cytoplasm. The enzyme catalyses Release of an N-terminal amino acid, Xaa-|-Yaa-, in which Xaa is preferably Leu, but may be other amino acids including Pro although not Arg or Lys, and Yaa may be Pro. Amino acid amides and methyl esters are also readily hydrolyzed, but rates on arylamides are exceedingly low.. It carries out the reaction Release of an N-terminal amino acid, preferentially leucine, but not glutamic or aspartic acids.. In terms of biological role, presumably involved in the processing and regular turnover of intracellular proteins. Catalyzes the removal of unsubstituted N-terminal amino acids from various peptides. The protein is Probable cytosol aminopeptidase of Wigglesworthia glossinidia brevipalpis.